Reading from the N-terminus, the 293-residue chain is 3-methyl-2-oxobutanoate hydroxymethyltransferase (293 aa).

Residues 1-25 (MTDSPTAGTPYGTLPPASPLPQRRP) are disordered. Positions 67 and 110 each coordinate Mg(2+). 3-methyl-2-oxobutanoate contacts are provided by residues 67–68 (DS), Asp110, and Lys139. Residue Glu141 coordinates Mg(2+). Glu208 (proton acceptor) is an active-site residue.

Belongs to the PanB family. As to quaternary structure, homodecamer; pentamer of dimers. Mg(2+) is required as a cofactor.

It localises to the cytoplasm. It catalyses the reaction 3-methyl-2-oxobutanoate + (6R)-5,10-methylene-5,6,7,8-tetrahydrofolate + H2O = 2-dehydropantoate + (6S)-5,6,7,8-tetrahydrofolate. It participates in cofactor biosynthesis; (R)-pantothenate biosynthesis; (R)-pantoate from 3-methyl-2-oxobutanoate: step 1/2. Functionally, catalyzes the reversible reaction in which hydroxymethyl group from 5,10-methylenetetrahydrofolate is transferred onto alpha-ketoisovalerate to form ketopantoate. This is 3-methyl-2-oxobutanoate hydroxymethyltransferase from Acidovorax sp. (strain JS42).